The chain runs to 355 residues: uncharacterized protein (355 aa).

A disordered region spans residues 1 to 61 (MNKKIEKNNN…PKRRGRRPKK (61 aa)). The segment covering 18–37 (YESNTTDNQLIMKKNANSGS) has biased composition (polar residues).

This is an uncharacterized protein from Acanthamoeba polyphaga mimivirus (APMV).